The primary structure comprises 239 residues: tRNA (guanine-N(1)-)-methyltransferase (239 aa).

S-adenosyl-L-methionine-binding positions include G113 and 133–138; that span reads IGDYVL. The disordered stretch occupies residues 218–239; the sequence is ERRPDLWAARATQNPPERKTNG.

This sequence belongs to the RNA methyltransferase TrmD family. In terms of assembly, homodimer.

It is found in the cytoplasm. It catalyses the reaction guanosine(37) in tRNA + S-adenosyl-L-methionine = N(1)-methylguanosine(37) in tRNA + S-adenosyl-L-homocysteine + H(+). Specifically methylates guanosine-37 in various tRNAs. This is tRNA (guanine-N(1)-)-methyltransferase from Nitrobacter winogradskyi (strain ATCC 25391 / DSM 10237 / CIP 104748 / NCIMB 11846 / Nb-255).